Here is a 402-residue protein sequence, read N- to C-terminus: UDP-glucose 6-dehydrogenase (402 aa).

Residues 2–19 (KIAV…GVLL), V11, D29, K34, T83, T118, and E145 each bind NAD(+). Substrate-binding positions include 141–145 (EFLRE), K204, N208, 249–253 (YNNPS), and G257. Y259 lines the NAD(+) pocket. The Nucleophile role is filled by C260. K263 contacts NAD(+). Substrate is bound at residue K320. NAD(+) is bound at residue R327.

This sequence belongs to the UDP-glucose/GDP-mannose dehydrogenase family.

The catalysed reaction is UDP-alpha-D-glucose + 2 NAD(+) + H2O = UDP-alpha-D-glucuronate + 2 NADH + 3 H(+). It functions in the pathway nucleotide-sugar biosynthesis; UDP-alpha-D-glucuronate biosynthesis; UDP-alpha-D-glucuronate from UDP-alpha-D-glucose: step 1/1. In terms of biological role, catalyzes the formation of UDP-glucuronic acid which is required for capsular hyaluronic acid synthesis. The polypeptide is UDP-glucose 6-dehydrogenase (hasB) (Streptococcus pyogenes serotype M18 (strain MGAS8232)).